We begin with the raw amino-acid sequence, 123 residues long: Beta-2-microglobulin (123 aa).

A signal peptide spans 1–21; the sequence is MSRLFLFALLGHLCFLPYLDA. An Ig-like C1-type domain is found at 29 to 118; it reads PRVQVYSRYP…STLNEPKVVK (90 aa). Cys-49 and Cys-104 form a disulfide bridge.

This sequence belongs to the beta-2-microglobulin family. As to quaternary structure, heterodimer of an alpha chain and a beta chain. Beta-2-microglobulin is the beta-chain of major histocompatibility complex class I molecules.

The protein localises to the secreted. In terms of biological role, component of the class I major histocompatibility complex (MHC). Involved in the presentation of peptide antigens to the immune system. This chain is Beta-2-microglobulin (B2M), found in Monodelphis domestica (Gray short-tailed opossum).